The sequence spans 519 residues: O-fucosyltransferase 31 (519 aa).

The helical; Signal-anchor for type II membrane protein transmembrane segment at 18-38 (ALAGVFVLLFPILYPNLFSPL) threads the bilayer. A glycan (N-linked (GlcNAc...) asparagine) is linked at asparagine 131. 302 to 304 (HLR) lines the substrate pocket. N-linked (GlcNAc...) asparagine glycans are attached at residues asparagine 373 and asparagine 474.

This sequence belongs to the glycosyltransferase GT106 family.

Its subcellular location is the membrane. It functions in the pathway glycan metabolism. The chain is O-fucosyltransferase 31 from Arabidopsis thaliana (Mouse-ear cress).